The chain runs to 427 residues: Light-independent protochlorophyllide reductase subunit N (427 aa).

Residues C29, C54, and C115 each coordinate [4Fe-4S] cluster.

It belongs to the BchN/ChlN family. As to quaternary structure, protochlorophyllide reductase is composed of three subunits; BchL, BchN and BchB. Forms a heterotetramer of two BchB and two BchN subunits. [4Fe-4S] cluster serves as cofactor.

It catalyses the reaction chlorophyllide a + oxidized 2[4Fe-4S]-[ferredoxin] + 2 ADP + 2 phosphate = protochlorophyllide a + reduced 2[4Fe-4S]-[ferredoxin] + 2 ATP + 2 H2O. The protein operates within porphyrin-containing compound metabolism; bacteriochlorophyll biosynthesis (light-independent). Its function is as follows. Component of the dark-operative protochlorophyllide reductase (DPOR) that uses Mg-ATP and reduced ferredoxin to reduce ring D of protochlorophyllide (Pchlide) to form chlorophyllide a (Chlide). This reaction is light-independent. The NB-protein (BchN-BchB) is the catalytic component of the complex. This Bradyrhizobium sp. (strain ORS 278) protein is Light-independent protochlorophyllide reductase subunit N.